A 354-amino-acid polypeptide reads, in one-letter code: 4-hydroxy-3-methylbut-2-en-1-yl diphosphate synthase (flavodoxin) (354 aa).

Residues cysteine 262, cysteine 265, cysteine 297, and glutamate 304 each coordinate [4Fe-4S] cluster.

The protein belongs to the IspG family. The cofactor is [4Fe-4S] cluster.

It carries out the reaction (2E)-4-hydroxy-3-methylbut-2-enyl diphosphate + oxidized [flavodoxin] + H2O + 2 H(+) = 2-C-methyl-D-erythritol 2,4-cyclic diphosphate + reduced [flavodoxin]. Its pathway is isoprenoid biosynthesis; isopentenyl diphosphate biosynthesis via DXP pathway; isopentenyl diphosphate from 1-deoxy-D-xylulose 5-phosphate: step 5/6. Its function is as follows. Converts 2C-methyl-D-erythritol 2,4-cyclodiphosphate (ME-2,4cPP) into 1-hydroxy-2-methyl-2-(E)-butenyl 4-diphosphate. In Helicobacter hepaticus (strain ATCC 51449 / 3B1), this protein is 4-hydroxy-3-methylbut-2-en-1-yl diphosphate synthase (flavodoxin).